The chain runs to 331 residues: Aflatoxin B1 aldehyde reductase member 4 (331 aa).

D44 serves as a coordination point for NADP(+). Catalysis depends on Y49, which acts as the Proton donor. The residue at position 85 (S85) is a Phosphoserine. H113 lines the substrate pocket. Residues 143-144 (SN), Q169, 198-208 (NPLAGGLLTGK), and R222 each bind NADP(+). Residue Y232 participates in substrate binding. Residue 290–298 (SSLEQLEQN) participates in NADP(+) binding.

Belongs to the aldo/keto reductase family. Aldo/keto reductase 2 subfamily. In terms of tissue distribution, mainly expressed in uterus.

Its function is as follows. Can reduce the dialdehyde protein-binding form of aflatoxin B1 (AFB1) to the non-binding AFB1 dialcohol. May be involved in protection of liver against the toxic and carcinogenic effects of AFB1, a potent hepatocarcinogen. This chain is Aflatoxin B1 aldehyde reductase member 4 (AKR7L), found in Homo sapiens (Human).